Reading from the N-terminus, the 109-residue chain is Large ribosomal subunit protein uL22 (109 aa).

Belongs to the universal ribosomal protein uL22 family. As to quaternary structure, part of the 50S ribosomal subunit.

Functionally, this protein binds specifically to 23S rRNA; its binding is stimulated by other ribosomal proteins, e.g. L4, L17, and L20. It is important during the early stages of 50S assembly. It makes multiple contacts with different domains of the 23S rRNA in the assembled 50S subunit and ribosome. The globular domain of the protein is located near the polypeptide exit tunnel on the outside of the subunit, while an extended beta-hairpin is found that lines the wall of the exit tunnel in the center of the 70S ribosome. This chain is Large ribosomal subunit protein uL22, found in Cupriavidus necator (strain ATCC 17699 / DSM 428 / KCTC 22496 / NCIMB 10442 / H16 / Stanier 337) (Ralstonia eutropha).